A 105-amino-acid chain; its full sequence is Large ribosomal subunit protein bL21 (105 aa).

It belongs to the bacterial ribosomal protein bL21 family. Part of the 50S ribosomal subunit. Contacts protein L20.

Functionally, this protein binds to 23S rRNA in the presence of protein L20. The sequence is that of Large ribosomal subunit protein bL21 from Natranaerobius thermophilus (strain ATCC BAA-1301 / DSM 18059 / JW/NM-WN-LF).